The chain runs to 314 residues: 4-hydroxy-3-methylbut-2-enyl diphosphate reductase (314 aa).

Cys12 serves as a coordination point for [4Fe-4S] cluster. (2E)-4-hydroxy-3-methylbut-2-enyl diphosphate is bound by residues His41 and His74. Dimethylallyl diphosphate is bound by residues His41 and His74. The isopentenyl diphosphate site is built by His41 and His74. Cys96 contacts [4Fe-4S] cluster. His124 is a binding site for (2E)-4-hydroxy-3-methylbut-2-enyl diphosphate. His124 lines the dimethylallyl diphosphate pocket. Residue His124 participates in isopentenyl diphosphate binding. The active-site Proton donor is the Glu126. Thr167 serves as a coordination point for (2E)-4-hydroxy-3-methylbut-2-enyl diphosphate. Cys197 provides a ligand contact to [4Fe-4S] cluster. (2E)-4-hydroxy-3-methylbut-2-enyl diphosphate is bound by residues Ser225, Ser226, Asn227, and Ser269. Dimethylallyl diphosphate-binding residues include Ser225, Ser226, Asn227, and Ser269. Residues Ser225, Ser226, Asn227, and Ser269 each contribute to the isopentenyl diphosphate site.

It belongs to the IspH family. Requires [4Fe-4S] cluster as cofactor.

It carries out the reaction isopentenyl diphosphate + 2 oxidized [2Fe-2S]-[ferredoxin] + H2O = (2E)-4-hydroxy-3-methylbut-2-enyl diphosphate + 2 reduced [2Fe-2S]-[ferredoxin] + 2 H(+). It catalyses the reaction dimethylallyl diphosphate + 2 oxidized [2Fe-2S]-[ferredoxin] + H2O = (2E)-4-hydroxy-3-methylbut-2-enyl diphosphate + 2 reduced [2Fe-2S]-[ferredoxin] + 2 H(+). Its pathway is isoprenoid biosynthesis; dimethylallyl diphosphate biosynthesis; dimethylallyl diphosphate from (2E)-4-hydroxy-3-methylbutenyl diphosphate: step 1/1. The protein operates within isoprenoid biosynthesis; isopentenyl diphosphate biosynthesis via DXP pathway; isopentenyl diphosphate from 1-deoxy-D-xylulose 5-phosphate: step 6/6. Catalyzes the conversion of 1-hydroxy-2-methyl-2-(E)-butenyl 4-diphosphate (HMBPP) into a mixture of isopentenyl diphosphate (IPP) and dimethylallyl diphosphate (DMAPP). Acts in the terminal step of the DOXP/MEP pathway for isoprenoid precursor biosynthesis. This Actinobacillus pleuropneumoniae serotype 5b (strain L20) protein is 4-hydroxy-3-methylbut-2-enyl diphosphate reductase.